We begin with the raw amino-acid sequence, 336 residues long: Holliday junction branch migration complex subunit RuvB (336 aa).

A large ATPase domain (RuvB-L) region spans residues 4–184 (SDRLISSQSI…FGIVQRLEYY (181 aa)). Residues isoleucine 23, arginine 24, glycine 65, lysine 68, threonine 69, threonine 70, 131 to 133 (EDY), arginine 174, tyrosine 184, and arginine 221 contribute to the ATP site. Residue threonine 69 participates in Mg(2+) binding. Positions 185 to 255 (SVDSLTQIVA…MAQQALEMLE (71 aa)) are small ATPAse domain (RuvB-S). A head domain (RuvB-H) region spans residues 258–336 (QHGFDLMDRK…HFGFSAIEQE (79 aa)). DNA is bound by residues arginine 313 and arginine 318.

This sequence belongs to the RuvB family. Homohexamer. Forms an RuvA(8)-RuvB(12)-Holliday junction (HJ) complex. HJ DNA is sandwiched between 2 RuvA tetramers; dsDNA enters through RuvA and exits via RuvB. An RuvB hexamer assembles on each DNA strand where it exits the tetramer. Each RuvB hexamer is contacted by two RuvA subunits (via domain III) on 2 adjacent RuvB subunits; this complex drives branch migration. In the full resolvosome a probable DNA-RuvA(4)-RuvB(12)-RuvC(2) complex forms which resolves the HJ.

It localises to the cytoplasm. It carries out the reaction ATP + H2O = ADP + phosphate + H(+). Its function is as follows. The RuvA-RuvB-RuvC complex processes Holliday junction (HJ) DNA during genetic recombination and DNA repair, while the RuvA-RuvB complex plays an important role in the rescue of blocked DNA replication forks via replication fork reversal (RFR). RuvA specifically binds to HJ cruciform DNA, conferring on it an open structure. The RuvB hexamer acts as an ATP-dependent pump, pulling dsDNA into and through the RuvAB complex. RuvB forms 2 homohexamers on either side of HJ DNA bound by 1 or 2 RuvA tetramers; 4 subunits per hexamer contact DNA at a time. Coordinated motions by a converter formed by DNA-disengaged RuvB subunits stimulates ATP hydrolysis and nucleotide exchange. Immobilization of the converter enables RuvB to convert the ATP-contained energy into a lever motion, pulling 2 nucleotides of DNA out of the RuvA tetramer per ATP hydrolyzed, thus driving DNA branch migration. The RuvB motors rotate together with the DNA substrate, which together with the progressing nucleotide cycle form the mechanistic basis for DNA recombination by continuous HJ branch migration. Branch migration allows RuvC to scan DNA until it finds its consensus sequence, where it cleaves and resolves cruciform DNA. This is Holliday junction branch migration complex subunit RuvB from Legionella pneumophila (strain Lens).